We begin with the raw amino-acid sequence, 54 residues long: Large ribosomal subunit protein bL33 (54 aa).

The protein belongs to the bacterial ribosomal protein bL33 family.

In Roseiflexus castenholzii (strain DSM 13941 / HLO8), this protein is Large ribosomal subunit protein bL33.